The sequence spans 407 residues: M protein, serotype 2.1 (407 aa).

The N-terminal stretch at 1-41 (MARKDTNKQYSLRKLKTGTASVAVAVAVLGAGFANQTTVKA) is a signal peptide. A 2 X 7 AA tandem repeats region spans residues 81-94 (VEEEHKKVEEEHKK). 4 stretches are compositionally biased toward basic and acidic residues: residues 83 to 144 (EEHK…KRYQ), 152 to 229 (QLEK…EKQI), 237 to 264 (LSRD…EKQI), and 272 to 288 (LSRD…KVEA). Residues 83-289 (EEHKKVEEEH…REAKKKVEAD (207 aa)) form a disordered region. 4 C repeats span residues 151–185 (QQLE…EAEH), 186–220 (QKLK…EAEH), 221–255 (QKLK…EAEH), and 256–290 (QKLK…EADL). 4 D repeats span residues 323-328 (AKLEAE), 329-334 (AKALKE), 337-342 (AKQAEE), and 344-349 (AKLKGN). The segment at 344-382 (AKLKGNQTPNAKVAPQANRSRSAMTQQKRTLPSTGETAN) is disordered. Residues 360–380 (ANRSRSAMTQQKRTLPSTGET) show a composition bias toward polar residues. Positions 374 to 378 (LPSTG) match the LPXTG sorting signal motif. A Pentaglycyl murein peptidoglycan amidated threonine modification is found at Thr377. A propeptide spans 378–407 (GETANPFFTAAAATVMVSAGMLALKRKEEN) (removed by sortase).

Belongs to the M protein family.

The protein resides in the secreted. It localises to the cell wall. Functionally, this protein is one of the different antigenic serotypes of protein M. Protein M is closely associated with virulence of the bacterium and can render the organism resistant to phagocytosis. The sequence is that of M protein, serotype 2.1 (emmL2.1) from Streptococcus pyogenes.